The sequence spans 623 residues: ATPase expression protein 3 (623 aa).

PPR repeat units lie at residues 217–251, 252–292, 362–396, 405–439, and 445–479; these read SVQC…GCKP, NTTT…NGIF, NLKF…QLKF, NSET…LVGP, and NVNT…SERY.

The protein resides in the mitochondrion inner membrane. Required for respiration. The protein is ATPase expression protein 3 (AEP3) of Candida glabrata (strain ATCC 2001 / BCRC 20586 / JCM 3761 / NBRC 0622 / NRRL Y-65 / CBS 138) (Yeast).